Consider the following 554-residue polypeptide: Hydroxylamine reductase (554 aa).

Positions 3, 6, 18, and 25 each coordinate [2Fe-2S] cluster. Positions 252, 276, 320, 408, 436, 461, 495, and 497 each coordinate hybrid [4Fe-2O-2S] cluster. Cysteine persulfide is present on C408.

Belongs to the HCP family. [2Fe-2S] cluster is required as a cofactor. It depends on hybrid [4Fe-2O-2S] cluster as a cofactor.

It is found in the cytoplasm. The catalysed reaction is A + NH4(+) + H2O = hydroxylamine + AH2 + H(+). Functionally, catalyzes the reduction of hydroxylamine to form NH(3) and H(2)O. The chain is Hydroxylamine reductase from Shewanella sp. (strain MR-7).